We begin with the raw amino-acid sequence, 397 residues long: Elongation factor Tu (397 aa).

One can recognise a tr-type G domain in the interval 10–206 (KPHVNIGTIG…AVDSYIPTPE (197 aa)). Residues 19–26 (GHVDHGKT) form a G1 region. 19-26 (GHVDHGKT) is a binding site for GTP. T26 is a binding site for Mg(2+). Residues 60–64 (GITIN) form a G2 region. Positions 81-84 (DCPG) are G3. GTP is bound by residues 81–85 (DCPGH) and 136–139 (NKAD). A G4 region spans residues 136–139 (NKAD). Positions 174–176 (SAL) are G5.

It belongs to the TRAFAC class translation factor GTPase superfamily. Classic translation factor GTPase family. EF-Tu/EF-1A subfamily. As to quaternary structure, monomer.

The protein localises to the cytoplasm. The catalysed reaction is GTP + H2O = GDP + phosphate + H(+). Functionally, GTP hydrolase that promotes the GTP-dependent binding of aminoacyl-tRNA to the A-site of ribosomes during protein biosynthesis. The polypeptide is Elongation factor Tu (Clostridium perfringens (strain ATCC 13124 / DSM 756 / JCM 1290 / NCIMB 6125 / NCTC 8237 / Type A)).